The following is a 195-amino-acid chain: Imidazoleglycerol-phosphate dehydratase (195 aa).

It belongs to the imidazoleglycerol-phosphate dehydratase family.

It is found in the cytoplasm. It catalyses the reaction D-erythro-1-(imidazol-4-yl)glycerol 3-phosphate = 3-(imidazol-4-yl)-2-oxopropyl phosphate + H2O. Its pathway is amino-acid biosynthesis; L-histidine biosynthesis; L-histidine from 5-phospho-alpha-D-ribose 1-diphosphate: step 6/9. This chain is Imidazoleglycerol-phosphate dehydratase, found in Nitrosomonas eutropha (strain DSM 101675 / C91 / Nm57).